The primary structure comprises 1262 residues: Tau-tubulin kinase homolog Asator (1262 aa).

The tract at residues Asn-13 to Ser-35 is disordered. Residues Gly-20–Ser-35 are compositionally biased toward polar residues. Residues Trp-173 to Met-436 enclose the Protein kinase domain. ATP-binding positions include Ile-179–Ile-187 and Lys-202. The active-site Proton acceptor is the Asp-293. 3 disordered regions span residues Thr-662–Ala-724, Arg-755–Ser-792, and Lys-984–Arg-1003. The span at Lys-667–Lys-679 shows a compositional bias: basic and acidic residues. Residues Arg-755–Ser-776 are compositionally biased toward polar residues.

This sequence belongs to the protein kinase superfamily. CK1 Ser/Thr protein kinase family. Interacts with Mgtor. Requires Mg(2+) as cofactor. In terms of tissue distribution, detected in larval brain.

The protein localises to the cytoplasm. It localises to the cytoskeleton. Its subcellular location is the spindle. The catalysed reaction is L-seryl-[protein] + ATP = O-phospho-L-seryl-[protein] + ADP + H(+). The enzyme catalyses L-threonyl-[protein] + ATP = O-phospho-L-threonyl-[protein] + ADP + H(+). Functionally, probable serine/threonine protein kinase. In Drosophila melanogaster (Fruit fly), this protein is Tau-tubulin kinase homolog Asator.